Here is a 493-residue protein sequence, read N- to C-terminus: Kelch-like protein 42 (493 aa).

Residues 5-77 form the BTB domain; that stretch reads EMVQIRLEDR…INAGGAREGW (73 aa). Kelch repeat units follow at residues 183 to 241, 242 to 289, 291 to 332, 334 to 379, 381 to 436, and 438 to 487; these read VLVA…ILDN, YLFI…AVNS, LYAI…ECKG, IYVI…SVEE, IYIV…ALHN, and GIYI…SLYL.

In terms of assembly, component of the BCR(KLHL42) E3 ubiquitin ligase complex, at least composed of CUL3 and KLHL42. Interacts (via the BTB domain) with CUL3. Interacts (via the kelch domains) with KATNA1.

Its subcellular location is the cytoplasm. It localises to the cytoskeleton. The protein resides in the spindle. Its pathway is protein modification; protein ubiquitination. Functionally, substrate-specific adapter of a BCR (BTB-CUL3-RBX1) E3 ubiquitin-protein ligase complex required for mitotic progression and cytokinesis. The BCR(KLHL42) E3 ubiquitin ligase complex mediates the ubiquitination and subsequent degradation of KATNA1. Involved in microtubule dynamics throughout mitosis. This chain is Kelch-like protein 42 (Klhl42), found in Mus musculus (Mouse).